The primary structure comprises 245 residues: Dehydrogenase/reductase SDR family member 6 (245 aa).

Residues 16 to 18, Asp-37, and Asp-58 each bind NAD(+); that span reads QGI. Substrate is bound at residue Arg-144. Residue Tyr-147 is the Proton acceptor of the active site. NAD(+) is bound by residues Lys-151 and 180–184; that span reads VDTPS. Arg-188 and Arg-205 together coordinate substrate.

This sequence belongs to the short-chain dehydrogenases/reductases (SDR) family. In terms of assembly, homotetramer.

Its subcellular location is the cytoplasm. It catalyses the reaction cis-4-hydroxy-L-proline + NAD(+) = 4-oxo-L-proline + NADH + H(+). The catalysed reaction is (R)-3-hydroxybutanoate + NAD(+) = acetoacetate + NADH + H(+). It participates in amino-acid metabolism. It functions in the pathway siderophore biosynthesis. NAD(H)-dependent dehydrogenase/reductase with a preference for cyclic substrates. Catalyzes stereoselective conversion of 4-oxo-L-proline to cis-4-hydroxy-L-proline, likely a detoxification mechanism for ketoprolines. Mediates the formation of 2,5-dihydroxybenzoate (2,5-DHBA), a siderophore that chelates free cytoplasmic iron, thereby regulating iron transport and homeostasis while protecting cells against free radical-induced oxidative stress. The iron-siderophore complex is imported into mitochondria, providing an iron source for mitochondrial metabolic processes in particular heme synthesis. May act as a 3-hydroxybutyrate dehydrogenase. This is Dehydrogenase/reductase SDR family member 6 (bdh2) from Aquarana catesbeiana (American bullfrog).